The chain runs to 317 residues: Lipoyl synthase (317 aa).

The interval 1 to 22 is disordered; the sequence is MVTVVNTLNRPRHPEKQNRPET. Over residues 12-22 the composition is skewed to basic and acidic residues; it reads RHPEKQNRPET. [4Fe-4S] cluster is bound by residues cysteine 57, cysteine 62, cysteine 68, cysteine 83, cysteine 87, cysteine 90, and serine 296. The Radical SAM core domain maps to 69 to 285; that stretch reads WEKKHATFMI…ETVAYAKGFL (217 aa).

This sequence belongs to the radical SAM superfamily. Lipoyl synthase family. [4Fe-4S] cluster is required as a cofactor.

The protein resides in the cytoplasm. It catalyses the reaction [[Fe-S] cluster scaffold protein carrying a second [4Fe-4S](2+) cluster] + N(6)-octanoyl-L-lysyl-[protein] + 2 oxidized [2Fe-2S]-[ferredoxin] + 2 S-adenosyl-L-methionine + 4 H(+) = [[Fe-S] cluster scaffold protein] + N(6)-[(R)-dihydrolipoyl]-L-lysyl-[protein] + 4 Fe(3+) + 2 hydrogen sulfide + 2 5'-deoxyadenosine + 2 L-methionine + 2 reduced [2Fe-2S]-[ferredoxin]. Its pathway is protein modification; protein lipoylation via endogenous pathway; protein N(6)-(lipoyl)lysine from octanoyl-[acyl-carrier-protein]: step 2/2. Functionally, catalyzes the radical-mediated insertion of two sulfur atoms into the C-6 and C-8 positions of the octanoyl moiety bound to the lipoyl domains of lipoate-dependent enzymes, thereby converting the octanoylated domains into lipoylated derivatives. The sequence is that of Lipoyl synthase from Azorhizobium caulinodans (strain ATCC 43989 / DSM 5975 / JCM 20966 / LMG 6465 / NBRC 14845 / NCIMB 13405 / ORS 571).